Consider the following 245-residue polypeptide: 2,3-bisphosphoglycerate-dependent phosphoglycerate mutase (245 aa).

Substrate contacts are provided by residues 8-15 (RHGQSLWN), 21-22 (TG), Arg60, 87-90 (ERHY), Lys98, 114-115 (RR), and 183-184 (GN). The active-site Tele-phosphohistidine intermediate is His9. Glu87 functions as the Proton donor/acceptor in the catalytic mechanism.

The protein belongs to the phosphoglycerate mutase family. BPG-dependent PGAM subfamily.

It catalyses the reaction (2R)-2-phosphoglycerate = (2R)-3-phosphoglycerate. Its pathway is carbohydrate degradation; glycolysis; pyruvate from D-glyceraldehyde 3-phosphate: step 3/5. In terms of biological role, catalyzes the interconversion of 2-phosphoglycerate and 3-phosphoglycerate. The sequence is that of 2,3-bisphosphoglycerate-dependent phosphoglycerate mutase from Bacillus cereus (strain AH187).